Reading from the N-terminus, the 553-residue chain is 4-coumarate--CoA ligase (553 aa).

6 residues coordinate ATP: Ser-198, Ser-199, Gly-200, Thr-201, Thr-202, and Lys-206. (E)-4-coumaroyl-AMP contacts are provided by Tyr-248 and Ser-252. Residue Lys-269 participates in CoA binding. The tract at residues 271–340 (EIVPFLELIQ…AKFPNAKLGQ (70 aa)) is SBD1. Ala-318, Gln-340, Gly-341, Thr-345, and Met-353 together coordinate (E)-4-coumaroyl-AMP. Gln-340, Gly-341, and Thr-345 together coordinate ATP. An SBD2 region spans residues 341–408 (GYGMTEAGPV…IRGDQIMKGY (68 aa)). ATP-binding residues include Asp-429 and Arg-444. 2 residues coordinate (E)-4-coumaroyl-AMP: Lys-446 and Lys-450. Positions 452 and 453 each coordinate CoA. Position 535 (Lys-535) interacts with ATP.

The protein belongs to the ATP-dependent AMP-binding enzyme family. The cofactor is Mg(2+).

It carries out the reaction (E)-4-coumarate + ATP + CoA = (E)-4-coumaroyl-CoA + AMP + diphosphate. The enzyme catalyses (E)-4-coumarate + ATP + H(+) = (E)-4-coumaroyl-AMP + diphosphate. It catalyses the reaction (E)-4-coumaroyl-AMP + CoA = (E)-4-coumaroyl-CoA + AMP + H(+). The protein operates within phytoalexin biosynthesis; 3,4',5-trihydroxystilbene biosynthesis; 3,4',5-trihydroxystilbene from trans-4-coumarate: step 1/2. Carboxylate--CoA ligase that may use 4-coumarate as substrate. Follows a two-step reaction mechanism, wherein the carboxylate substrate first undergoes adenylation by ATP, followed by a thioesterification in the presence of CoA to yield the final CoA thioester. The chain is 4-coumarate--CoA ligase from Vanilla planifolia (Vanilla).